We begin with the raw amino-acid sequence, 150 residues long: MILGIGTDLANIERIEGTLERFGDRFRNRVFTDREQARAERMPEPAAVYAKRWAAKEACSKALGTGLRMGIAWKDMSVRNLRTGQPVMEVTGWARERLDQMTPDGYGAVIHVTLTDDHPWAQAMVVIEALTPEEAELRPDLGPAARRTMS.

Mg(2+) contacts are provided by aspartate 8 and glutamate 57.

It belongs to the P-Pant transferase superfamily. AcpS family. The cofactor is Mg(2+).

It localises to the cytoplasm. It catalyses the reaction apo-[ACP] + CoA = holo-[ACP] + adenosine 3',5'-bisphosphate + H(+). Transfers the 4'-phosphopantetheine moiety from coenzyme A to a Ser of acyl-carrier-protein. In Jannaschia sp. (strain CCS1), this protein is Holo-[acyl-carrier-protein] synthase.